Reading from the N-terminus, the 382-residue chain is Glutamyl-tRNA reductase (382 aa).

Substrate contacts are provided by residues 38-41 (TCNR), S85, 90-92 (ENQ), and Q96. Residue C39 is the Nucleophile of the active site. 164 to 169 (GAGEIG) contributes to the NADP(+) binding site.

This sequence belongs to the glutamyl-tRNA reductase family. In terms of assembly, homodimer.

The catalysed reaction is (S)-4-amino-5-oxopentanoate + tRNA(Glu) + NADP(+) = L-glutamyl-tRNA(Glu) + NADPH + H(+). The protein operates within porphyrin-containing compound metabolism; protoporphyrin-IX biosynthesis; 5-aminolevulinate from L-glutamyl-tRNA(Glu): step 1/2. Catalyzes the NADPH-dependent reduction of glutamyl-tRNA(Glu) to glutamate 1-semialdehyde (GSA). This Methanococcus maripaludis (strain C7 / ATCC BAA-1331) protein is Glutamyl-tRNA reductase.